The sequence spans 590 residues: Aspartate--tRNA(Asp/Asn) ligase (590 aa).

L-aspartate is bound at residue E172. Residues 196–199 (QLFK) are aspartate. L-aspartate is bound at residue R218. Residues 218 to 220 (RDE) and Q227 contribute to the ATP site. H449 serves as a coordination point for L-aspartate. E484 serves as a coordination point for ATP. R491 contacts L-aspartate. ATP is bound at residue 536–539 (GVDR).

This sequence belongs to the class-II aminoacyl-tRNA synthetase family. Type 1 subfamily. As to quaternary structure, homodimer.

The protein resides in the cytoplasm. The enzyme catalyses tRNA(Asx) + L-aspartate + ATP = L-aspartyl-tRNA(Asx) + AMP + diphosphate. Functionally, aspartyl-tRNA synthetase with relaxed tRNA specificity since it is able to aspartylate not only its cognate tRNA(Asp) but also tRNA(Asn). Reaction proceeds in two steps: L-aspartate is first activated by ATP to form Asp-AMP and then transferred to the acceptor end of tRNA(Asp/Asn). The sequence is that of Aspartate--tRNA(Asp/Asn) ligase from Francisella tularensis subsp. holarctica (strain FTNF002-00 / FTA).